The sequence spans 279 residues: Thymidylate synthase 1 (279 aa).

Residue 141–142 coordinates dUMP; the sequence is RR. C161 (nucleophile) is an active-site residue. DUMP contacts are provided by residues 181–184, N192, and 222–224; these read RSND and HVY. A (6R)-5,10-methylene-5,6,7,8-tetrahydrofolate-binding site is contributed by D184. A278 is a (6R)-5,10-methylene-5,6,7,8-tetrahydrofolate binding site.

The protein belongs to the thymidylate synthase family. Bacterial-type ThyA subfamily. Homodimer.

Its subcellular location is the cytoplasm. The enzyme catalyses dUMP + (6R)-5,10-methylene-5,6,7,8-tetrahydrofolate = 7,8-dihydrofolate + dTMP. Its pathway is pyrimidine metabolism; dTTP biosynthesis. Catalyzes the reductive methylation of 2'-deoxyuridine-5'-monophosphate (dUMP) to 2'-deoxythymidine-5'-monophosphate (dTMP) while utilizing 5,10-methylenetetrahydrofolate (mTHF) as the methyl donor and reductant in the reaction, yielding dihydrofolate (DHF) as a by-product. This enzymatic reaction provides an intracellular de novo source of dTMP, an essential precursor for DNA biosynthesis. The polypeptide is Thymidylate synthase 1 (Bacillus subtilis (strain 168)).